Consider the following 437-residue polypeptide: Adenylosuccinate synthetase (437 aa).

Residues 25 to 31 (GDEGKGK), 53 to 55 (GHT), and K62 each bind GTP. D26 serves as the catalytic Proton acceptor. 2 residues coordinate Mg(2+): D26 and G53. Residues 26 to 29 (DEGK) and 51 to 54 (NAGH) contribute to the IMP site. H54 acts as the Proton donor in catalysis. The IMP site is built by T141, R155, N232, and T247. Residue T307 coordinates GTP. Residue 307-313 (TTTKRPR) coordinates substrate. IMP is bound at residue R311. GTP contacts are provided by residues R313, 339-341 (KLD), and 425-427 (GIG).

Belongs to the adenylosuccinate synthetase family. Homodimer. It depends on Mg(2+) as a cofactor.

The protein localises to the cytoplasm. It catalyses the reaction IMP + L-aspartate + GTP = N(6)-(1,2-dicarboxyethyl)-AMP + GDP + phosphate + 2 H(+). It participates in purine metabolism; AMP biosynthesis via de novo pathway; AMP from IMP: step 1/2. In terms of biological role, plays an important role in the salvage pathway for purine nucleotide biosynthesis. Catalyzes the first committed step in the biosynthesis of AMP from IMP. The chain is Adenylosuccinate synthetase from Plasmodium vivax (strain Salvador I).